Consider the following 392-residue polypeptide: uncharacterized protein (392 aa).

Transmembrane regions (helical) follow at residues 2–23 (WLANFFVSASTTMIVPFLSLYI), 38–60 (SGYVFGITFLMAFLVSPFWGRFG), 73–95 (GTGIALSIFFMGFVTSVYQLFFL), 153–175 (FTYTFFITSFVIFSSVLLVLFGV), 195–217 (VLSYIFHHPALWVMMLLTMLIQT), 237–259 (VNLAFFSGMAFSATGLGSLLLAR), 272–291 (RILIGLLLAASFFFIPQALA), 297–319 (LLVFRFLFGMAMGGLLPCITAAI), 331–353 (VLGYNVSFRFLGNVLGPLLGGII), and 357–379 (FTISATFYVTAFLFFAGACMLWI).

This sequence belongs to the major facilitator superfamily.

It is found in the cell membrane. This is an uncharacterized protein from Bacillus subtilis (strain 168).